The following is a 270-amino-acid chain: Phosphatidylglycerol--prolipoprotein diacylglyceryl transferase (270 aa).

4 consecutive transmembrane segments (helical) span residues 19–39 (FPVY…LWLA), 53–73 (FVDL…AYYV), 92–112 (QGGL…IIYA), and 117–137 (ISFW…QAIG). Arginine 138 is a binding site for a 1,2-diacyl-sn-glycero-3-phospho-(1'-sn-glycerol). The next 3 helical transmembrane spans lie at 178-198 (HPTF…LLLL), 206-226 (GELF…VEEL), and 236-256 (LRIA…FIIV).

It belongs to the Lgt family.

The protein resides in the cell membrane. The enzyme catalyses L-cysteinyl-[prolipoprotein] + a 1,2-diacyl-sn-glycero-3-phospho-(1'-sn-glycerol) = an S-1,2-diacyl-sn-glyceryl-L-cysteinyl-[prolipoprotein] + sn-glycerol 1-phosphate + H(+). Its pathway is protein modification; lipoprotein biosynthesis (diacylglyceryl transfer). Catalyzes the transfer of the diacylglyceryl group from phosphatidylglycerol to the sulfhydryl group of the N-terminal cysteine of a prolipoprotein, the first step in the formation of mature lipoproteins. This is Phosphatidylglycerol--prolipoprotein diacylglyceryl transferase from Bacillus cytotoxicus (strain DSM 22905 / CIP 110041 / 391-98 / NVH 391-98).